Consider the following 436-residue polypeptide: Histidine--tRNA ligase (436 aa).

Belongs to the class-II aminoacyl-tRNA synthetase family. As to quaternary structure, homodimer.

It is found in the cytoplasm. It carries out the reaction tRNA(His) + L-histidine + ATP = L-histidyl-tRNA(His) + AMP + diphosphate + H(+). In Prochlorococcus marinus (strain MIT 9303), this protein is Histidine--tRNA ligase.